A 286-amino-acid polypeptide reads, in one-letter code: MQNKIDYKNIKKIGLVTRPNVSLDKEILKLQSILSIYKVELVLLKESSEILDLPKYGLDDLFKISDFVISLGGDGTLISLCRKACEYDKAVLGIHAGHLGFLTDFKVDEAENFFQAFFQGEFRIEKPYLLSIFLEDRQGKILEKLAFNDVVISKNNQASMAHIEVFRKEKKFNEYFGDGLIVATPAGSTAYNLSANGPIVYTLAQAFILTPVCSHSLTQRPIVLPKGFEIEIMAKDCMLCIDGQENYKMNDFKSIKVGLSDKNVALIHPKNRDYFQILKEKLHWGN.

D74 serves as the catalytic Proton acceptor. Residues 74-75 (DG), 148-149 (ND), D178, A186, 189-194 (TAYNLS), and Q244 each bind NAD(+).

It belongs to the NAD kinase family. The cofactor is a divalent metal cation.

Its subcellular location is the cytoplasm. The enzyme catalyses NAD(+) + ATP = ADP + NADP(+) + H(+). Functionally, involved in the regulation of the intracellular balance of NAD and NADP, and is a key enzyme in the biosynthesis of NADP. Catalyzes specifically the phosphorylation on 2'-hydroxyl of the adenosine moiety of NAD to yield NADP. In Campylobacter jejuni subsp. jejuni serotype O:2 (strain ATCC 700819 / NCTC 11168), this protein is NAD kinase.